The sequence spans 180 residues: UPF0227 protein ECA1814 (180 aa).

Belongs to the UPF0227 family.

This chain is UPF0227 protein ECA1814, found in Pectobacterium atrosepticum (strain SCRI 1043 / ATCC BAA-672) (Erwinia carotovora subsp. atroseptica).